Here is a 195-residue protein sequence, read N- to C-terminus: 3-isopropylmalate dehydratase small subunit (195 aa).

This sequence belongs to the LeuD family. LeuD type 1 subfamily. Heterodimer of LeuC and LeuD.

The catalysed reaction is (2R,3S)-3-isopropylmalate = (2S)-2-isopropylmalate. It participates in amino-acid biosynthesis; L-leucine biosynthesis; L-leucine from 3-methyl-2-oxobutanoate: step 2/4. Functionally, catalyzes the isomerization between 2-isopropylmalate and 3-isopropylmalate, via the formation of 2-isopropylmaleate. The protein is 3-isopropylmalate dehydratase small subunit of Salinispora arenicola (strain CNS-205).